The chain runs to 135 residues: MRLTIVSVGHKMPDWVATATIEIKEIKPDLTLAKEAVKIAAAIPKGSRVIALDERGKDQTTQNLATQLASWRQEGFDITFLIGGADGLDPSLKTTAQAIWRLSSLTLPHAMARVLLVEQLYRAWTILQGHPYHRE.

Residues leucine 52, glycine 83, and 102–107 (LSSLTL) each bind S-adenosyl-L-methionine.

It belongs to the RNA methyltransferase RlmH family. As to quaternary structure, homodimer.

The protein resides in the cytoplasm. The catalysed reaction is pseudouridine(1915) in 23S rRNA + S-adenosyl-L-methionine = N(3)-methylpseudouridine(1915) in 23S rRNA + S-adenosyl-L-homocysteine + H(+). Specifically methylates the pseudouridine at position 1915 (m3Psi1915) in 23S rRNA. This is Ribosomal RNA large subunit methyltransferase H from Polynucleobacter necessarius subsp. necessarius (strain STIR1).